Reading from the N-terminus, the 455-residue chain is N(5)-hydroxyornithine:cis-anhydromevalonyl coenzyme A-N(5)-transacylase SIDF (455 aa).

The short motif at 453–455 (PKL) is the PTS1-type peroxisomal targeting signal element.

It belongs to the lysine N-acyltransferase mbtK family.

It localises to the peroxisome. Its pathway is siderophore biosynthesis. Functionally, hydroxyornithine transacylase; part of the gene cluster that mediates the biosynthesis of at least 11 siderophores, including beauverichelin A, dimerumic acid (DA), Na-dimethyl coprogen (NADC), eleutherazine B, ferricrocin (FC), fusarinine A, fusarinine C (FsC), metachelin A, mevalonolactone, rhodotorulic acid (RA) and tenellin. This cocktail of siderophores for iron metabolism is essential for virulence, and more specifically for the fungal virulence in penetrating through the host cuticle. Siderophore synthesis is also involved in conidial germination under iron-deficient conditions. For biosynthesis of fusarinine C, the transacylase SIDF transfers anhydromevalonyl to N(5)-hydroxyornithine. The required anhydromevalonyl-CoA moiety is derived from mevalonate by CoA ligation and dehydration catalyzed by SIDI and sidH respectively. This is N(5)-hydroxyornithine:cis-anhydromevalonyl coenzyme A-N(5)-transacylase SIDF from Beauveria bassiana (strain ARSEF 2860) (White muscardine disease fungus).